Here is a 131-residue protein sequence, read N- to C-terminus: Large ribosomal subunit protein bL17 (131 aa).

It belongs to the bacterial ribosomal protein bL17 family. As to quaternary structure, part of the 50S ribosomal subunit. Contacts protein L32.

This is Large ribosomal subunit protein bL17 from Paraburkholderia phymatum (strain DSM 17167 / CIP 108236 / LMG 21445 / STM815) (Burkholderia phymatum).